The sequence spans 152 residues: Snaclec anticoagulant protein subunit A (152 aa).

A signal peptide spans 1-23 (MGRFIFVSFGLLVVYLSLSGTAA). Residues 24–152 (DCSSSWSSYE…EQRDPFVCEA (129 aa)) form the C-type lectin domain. 3 disulfide bridges follow: Cys25-Cys36, Cys53-Cys150, and Cys125-Cys142. Ca(2+) is bound by residues Ser64, Glu66, and Glu70. Glu151 serves as a coordination point for Ca(2+).

This sequence belongs to the snaclec family. Heterodimer of subunits A and B; disulfide-linked. As to expression, expressed by the venom gland.

It localises to the secreted. Functionally, anticoagulant protein which binds to the gamma-carboxyglutamic acid-domain regions of factors IX and factor X in the presence of calcium with a 1 to 1 stoichiometry. Also inhibits platelet aggregation by binding to platelet glycoprotein Ibalpha (GP1BA) and functioning as a blocker of vWF. Is devoid of hemorrhagic and lethal activities. Possesses antithrombotic and thrombolytic activities. Also hydrolyzes the Aalpha-chain of fibrinogen. Does not affect the Bbeta-chain and the gamma chain. In Deinagkistrodon acutus (Hundred-pace snake), this protein is Snaclec anticoagulant protein subunit A.